We begin with the raw amino-acid sequence, 259 residues long: Probable dihydroorotate dehydrogenase B (NAD(+)), electron transfer subunit (259 aa).

The FAD-binding FR-type domain maps to 1 to 89 (MLPLNATITQ…RGPFGKGFTL (89 aa)). [2Fe-2S] cluster is bound by residues Cys-211, Cys-216, Cys-219, and Cys-229.

It belongs to the PyrK family. In terms of assembly, heterotetramer of 2 PyrK and 2 PyrD type B subunits. [2Fe-2S] cluster serves as cofactor. Requires FAD as cofactor.

It participates in pyrimidine metabolism; UMP biosynthesis via de novo pathway; orotate from (S)-dihydroorotate (NAD(+) route): step 1/1. Its function is as follows. Responsible for channeling the electrons from the oxidation of dihydroorotate from the FMN redox center in the PyrD type B subunit to the ultimate electron acceptor NAD(+). The chain is Probable dihydroorotate dehydrogenase B (NAD(+)), electron transfer subunit from Methanosarcina mazei (strain ATCC BAA-159 / DSM 3647 / Goe1 / Go1 / JCM 11833 / OCM 88) (Methanosarcina frisia).